We begin with the raw amino-acid sequence, 610 residues long: Glutamine--fructose-6-phosphate aminotransferase [isomerizing] (610 aa).

Catalysis depends on Cys2, which acts as the Nucleophile; for GATase activity. The Glutamine amidotransferase type-2 domain maps to 2–218 (CGIVGAVAQR…EGDVAEITRR (217 aa)). 2 SIS domains span residues 286–426 (AAEI…QQGR) and 459–600 (LATD…VDQP). Lys605 acts as the For Fru-6P isomerization activity in catalysis.

In terms of assembly, homodimer.

It localises to the cytoplasm. The enzyme catalyses D-fructose 6-phosphate + L-glutamine = D-glucosamine 6-phosphate + L-glutamate. In terms of biological role, catalyzes the first step in hexosamine metabolism, converting fructose-6P into glucosamine-6P using glutamine as a nitrogen source. The chain is Glutamine--fructose-6-phosphate aminotransferase [isomerizing] from Vibrio vulnificus (strain CMCP6).